The following is a 170-amino-acid chain: ATP synthase subunit b, chloroplastic (170 aa).

The chain crosses the membrane as a helical span at residues 15 to 35; that stretch reads ILETNVINLAVVVGVVVFFVG.

This sequence belongs to the ATPase B chain family. F-type ATPases have 2 components, F(1) - the catalytic core - and F(0) - the membrane proton channel. F(1) has five subunits: alpha(3), beta(3), gamma(1), delta(1), epsilon(1). F(0) has four main subunits: a(1), b(1), b'(1) and c(10-14). The alpha and beta chains form an alternating ring which encloses part of the gamma chain. F(1) is attached to F(0) by a central stalk formed by the gamma and epsilon chains, while a peripheral stalk is formed by the delta, b and b' chains.

It is found in the plastid. The protein localises to the chloroplast thylakoid membrane. F(1)F(0) ATP synthase produces ATP from ADP in the presence of a proton or sodium gradient. F-type ATPases consist of two structural domains, F(1) containing the extramembraneous catalytic core and F(0) containing the membrane proton channel, linked together by a central stalk and a peripheral stalk. During catalysis, ATP synthesis in the catalytic domain of F(1) is coupled via a rotary mechanism of the central stalk subunits to proton translocation. Functionally, component of the F(0) channel, it forms part of the peripheral stalk, linking F(1) to F(0). This is ATP synthase subunit b, chloroplastic from Stigeoclonium helveticum (Green alga).